A 348-amino-acid polypeptide reads, in one-letter code: Centromere protein N-A (348 aa).

The protein belongs to the CENP-N/CHL4 family.

The protein resides in the nucleus. It localises to the chromosome. The protein localises to the centromere. Functionally, probable component of a centromeric complex involved in assembly of kinetochore proteins, mitotic progression and chromosome segregation. This Xenopus laevis (African clawed frog) protein is Centromere protein N-A (cenpn-a).